A 365-amino-acid polypeptide reads, in one-letter code: tRNA/tmRNA (uracil-C(5))-methyltransferase (365 aa).

Residues Q189, Y217, N222, E238, and D298 each coordinate S-adenosyl-L-methionine. Catalysis depends on C323, which acts as the Nucleophile. E357 (proton acceptor) is an active-site residue.

The protein belongs to the class I-like SAM-binding methyltransferase superfamily. RNA M5U methyltransferase family. TrmA subfamily.

The enzyme catalyses uridine(54) in tRNA + S-adenosyl-L-methionine = 5-methyluridine(54) in tRNA + S-adenosyl-L-homocysteine + H(+). The catalysed reaction is uridine(341) in tmRNA + S-adenosyl-L-methionine = 5-methyluridine(341) in tmRNA + S-adenosyl-L-homocysteine + H(+). Its function is as follows. Dual-specificity methyltransferase that catalyzes the formation of 5-methyluridine at position 54 (m5U54) in all tRNAs, and that of position 341 (m5U341) in tmRNA (transfer-mRNA). The polypeptide is tRNA/tmRNA (uracil-C(5))-methyltransferase (Psychromonas ingrahamii (strain DSM 17664 / CCUG 51855 / 37)).